A 312-amino-acid chain; its full sequence is UDP-N-acetylenolpyruvoylglucosamine reductase (312 aa).

Residues 37–205 (VGGPADALVV…VCAEFALCPG (169 aa)) enclose the FAD-binding PCMH-type domain. Residue Arg185 is part of the active site. Ser234 functions as the Proton donor in the catalytic mechanism. Glu304 is a catalytic residue.

It belongs to the MurB family. FAD is required as a cofactor.

It is found in the cytoplasm. The catalysed reaction is UDP-N-acetyl-alpha-D-muramate + NADP(+) = UDP-N-acetyl-3-O-(1-carboxyvinyl)-alpha-D-glucosamine + NADPH + H(+). It functions in the pathway cell wall biogenesis; peptidoglycan biosynthesis. Functionally, cell wall formation. The protein is UDP-N-acetylenolpyruvoylglucosamine reductase of Syntrophus aciditrophicus (strain SB).